The primary structure comprises 223 residues: Acetate CoA-transferase subunit beta (223 aa).

Glutamate 46 is an active-site residue.

The protein belongs to the 3-oxoacid CoA-transferase subunit B family. As to quaternary structure, heterotetramer composed of two alpha subunits (AtoD) and two beta subunits (AtoA).

The enzyme catalyses an acyl-CoA + acetate = a carboxylate + acetyl-CoA. It carries out the reaction acetoacetate + acetyl-CoA = acetoacetyl-CoA + acetate. It participates in lipid metabolism; short-chain fatty acid metabolism. In terms of biological role, coenzyme A transferase which is involved in short-chain fatty acid degradation and catalyzes the activation of short-chain fatty acids to their respective CoA thiolesters. In Haemophilus influenzae (strain ATCC 51907 / DSM 11121 / KW20 / Rd), this protein is Acetate CoA-transferase subunit beta (atoA).